The chain runs to 139 residues: MSTYYFVIVGQNDNPIYEKEFSTVNKELRKEDHRHLTQFIAHAALDLVDEHKWKTANMQLKSIDRFNQWFVSAFITASQIRFIIVHDNKNDEGIKNFFNEMYDTYIKNSMNAFYRINTPIKSPMFEKKSEIFGRKYLLS.

The protein belongs to the TRAPP small subunits family. Sedlin subfamily. In terms of assembly, part of the multisubunit TRAPP (transport protein particle) complex.

It is found in the cytoplasm. Its subcellular location is the perinuclear region. The protein resides in the endoplasmic reticulum. It localises to the golgi apparatus. Its function is as follows. May play a role in vesicular transport from endoplasmic reticulum to Golgi. Involved in dsRNA uptake. This Drosophila melanogaster (Fruit fly) protein is Probable trafficking protein particle complex subunit 2.